The primary structure comprises 1097 residues: UPF0746 protein DDB_G0281095 (1097 aa).

Positions 1–11 are enriched in basic and acidic residues; that stretch reads MVNNNKRKEIE. The segment at 1 to 24 is disordered; that stretch reads MVNNNKRKEIENQENDNDDDNDGL. The span at 12-22 shows a compositional bias: acidic residues; sequence NQENDNDDDND. Positions 35-69 constitute an SAP domain; it reads YDSIRSKELQTIAKSLGLPNNGKKQEVYKRIEGYF. Positions 329–521 form a coiled coil; it reads FKEIREIHQQ…QLILELNEIQ (193 aa).

The protein belongs to the UPF0746 family.

This is UPF0746 protein DDB_G0281095 from Dictyostelium discoideum (Social amoeba).